A 543-amino-acid polypeptide reads, in one-letter code: Zinc finger protein 280B (543 aa).

N-acetylmethionine is present on methionine 1. Over residues 1 to 10 (MEQSCEEEKE) the composition is skewed to acidic residues. The disordered stretch occupies residues 1–23 (MEQSCEEEKEPEPQKNIQETKQV). Phosphoserine occurs at positions 68 and 70. The segment at 105–138 (SQLESRSTDSPIIIEPLSKPDYRNSSPQVVPNNS) is disordered. The segment covering 128–138 (NSSPQVVPNNS) has biased composition (low complexity). Residues lysine 173, lysine 247, and lysine 261 each participate in a glycyl lysine isopeptide (Lys-Gly) (interchain with G-Cter in SUMO2) cross-link. 4 consecutive C2H2-type zinc fingers follow at residues 343-366 (TTCQ…ENVH), 373-396 (TVCK…KDHH), 432-454 (LLCP…YRGH), and 460-483 (HQCS…TQCH). The disordered stretch occupies residues 518–543 (ASITVSTSDSEPSLPRSKSKISKKSH). Over residues 534-543 (SKSKISKKSH) the composition is skewed to basic residues.

It is found in the nucleus. In terms of biological role, may function as a transcription factor. This is Zinc finger protein 280B (ZNF280B) from Homo sapiens (Human).